The following is a 523-amino-acid chain: Metalloprotease TIKI2 (523 aa).

The first 26 residues, 1 to 26 (MGKTMWARAVFLCFSVGTLLWQEVLT), serve as a signal peptide directing secretion. The Extracellular segment spans residues 27-499 (RRIPVDTGQC…HSQSNSSPKC (473 aa)). N-linked (GlcNAc...) asparagine glycosylation is found at asparagine 225, asparagine 234, asparagine 283, and asparagine 341. Residues 500–516 (LSASPAFLYTLVTLCLI) traverse the membrane as a helical segment. The Cytoplasmic portion of the chain corresponds to 517 to 523 (TTMRTRS).

It belongs to the TIKI family. It depends on Mn(2+) as a cofactor. Co(2+) is required as a cofactor.

The protein localises to the cell membrane. Its function is as follows. Metalloprotease that acts as a negative regulator of the Wnt signaling pathway by mediating the cleavage of the N-terminal residues of a subset of Wnt proteins. Following cleavage, Wnt proteins become oxidized and form large disulfide-bond oligomers, leading to their inactivation. Able to cleave wnt8. Required for head formation. The protein is Metalloprotease TIKI2 (trabd2b) of Xenopus tropicalis (Western clawed frog).